A 274-amino-acid chain; its full sequence is 3-methyl-2-oxobutanoate hydroxymethyltransferase (274 aa).

Mg(2+) is bound by residues Asp-46 and Asp-85. 3-methyl-2-oxobutanoate contacts are provided by residues 46 to 47 (DS), Asp-85, and Lys-115. Glu-117 provides a ligand contact to Mg(2+). The Proton acceptor role is filled by Glu-184.

It belongs to the PanB family. Homodecamer; pentamer of dimers. Mg(2+) is required as a cofactor.

The protein resides in the cytoplasm. The catalysed reaction is 3-methyl-2-oxobutanoate + (6R)-5,10-methylene-5,6,7,8-tetrahydrofolate + H2O = 2-dehydropantoate + (6S)-5,6,7,8-tetrahydrofolate. It functions in the pathway cofactor biosynthesis; (R)-pantothenate biosynthesis; (R)-pantoate from 3-methyl-2-oxobutanoate: step 1/2. Catalyzes the reversible reaction in which hydroxymethyl group from 5,10-methylenetetrahydrofolate is transferred onto alpha-ketoisovalerate to form ketopantoate. The sequence is that of 3-methyl-2-oxobutanoate hydroxymethyltransferase from Thermoanaerobacter pseudethanolicus (strain ATCC 33223 / 39E) (Clostridium thermohydrosulfuricum).